Consider the following 398-residue polypeptide: Serine/threonine-protein kinase UL13 (398 aa).

The segment covering methionine 1–valine 10 has biased composition (gly residues). Positions methionine 1–serine 44 are disordered. Residues threonine 80–alanine 398 enclose the Protein kinase domain. ATP contacts are provided by residues valine 86–valine 94 and lysine 103. The active-site Proton acceptor is the aspartate 194.

Belongs to the protein kinase superfamily. Ser/Thr protein kinase family. Post-translationally, autophosphorylated.

It localises to the virion tegument. The protein resides in the host nucleus. Its subcellular location is the host cytoplasm. It is found in the host endoplasmic reticulum. The catalysed reaction is L-seryl-[protein] + ATP = O-phospho-L-seryl-[protein] + ADP + H(+). It carries out the reaction L-threonyl-[protein] + ATP = O-phospho-L-threonyl-[protein] + ADP + H(+). Functionally, multifunctional serine/threonine kinase that plays a role in several processes including egress of virus particles from the nucleus, modulation of the actin cytoskeleton and regulation of viral and cellular gene expression. Regulates the nuclear localization of viral envelopment factors UL34 and UL31, by phosphorylating the US3 kinase, indicating a role in nuclear egress. Disrupts host nuclear lamins, including LMNA and LMNB1. Phosphorylates the viral Fc receptor composed of glycoproteins E (gE) and I (gI). Phosphorylation of glycoprotein E (gE) by UL13 alters its subcellular localization, from the host early endosome to the plasma membrane. Participates in the transcriptional regulation of cellular and viral mRNAs mainly by phosphorylating the viral transcriptional regulator ICP22. Functions as an antagonist of the host RLR-mediated antiviral responses via suppression of the transcription of cytosolic receptors RIGI and IFIH1. Facilitates immune evasion also by recruiting host RNF5 to initiate the 'Lys-27'-/'Lys-29'-linked polyubiquitination of STING1; leading to its degradation. Blocks host IFN-beta transactivation mediated by the cGAS-STING pathway by phosphorylating host IRF3. In turn, IRF3 binding to the IRF3-responsive promoters and downstream interferon stimulated genes/ISG expression are greatly impaired. Induces the activation of the host DNA damage response via H2AX phosphorylation to improve efficient viral replication and progeny production. This Suid herpesvirus 1 (strain NIA-3) (SuHV-1) protein is Serine/threonine-protein kinase UL13 (UL13).